The sequence spans 582 residues: A-type ATP synthase subunit A 1 (582 aa).

ATP is bound at residue 231–238 (GPFGSGKT).

Belongs to the ATPase alpha/beta chains family. Has multiple subunits with at least A(3), B(3), C, D, E, F, H, I and proteolipid K(x).

The protein localises to the cell membrane. The catalysed reaction is ATP + H2O + 4 H(+)(in) = ADP + phosphate + 5 H(+)(out). In terms of biological role, component of the A-type ATP synthase that produces ATP from ADP in the presence of a proton gradient across the membrane. The A chain is the catalytic subunit. The sequence is that of A-type ATP synthase subunit A 1 from Methanospirillum hungatei JF-1 (strain ATCC 27890 / DSM 864 / NBRC 100397 / JF-1).